We begin with the raw amino-acid sequence, 307 residues long: tRNA pseudouridine synthase B (307 aa).

The active-site Nucleophile is the D45.

The protein belongs to the pseudouridine synthase TruB family. Type 1 subfamily.

The catalysed reaction is uridine(55) in tRNA = pseudouridine(55) in tRNA. Functionally, responsible for synthesis of pseudouridine from uracil-55 in the psi GC loop of transfer RNAs. The sequence is that of tRNA pseudouridine synthase B from Heliobacterium mobile (Heliobacillus mobilis).